We begin with the raw amino-acid sequence, 201 residues long: Ribonuclease HII (201 aa).

Positions 12-201 constitute an RNase H type-2 domain; the sequence is DLVAGVDEVG…VRELLDASVE (190 aa). The a divalent metal cation site is built by D18, E19, and D110.

Belongs to the RNase HII family. Mn(2+) serves as cofactor. It depends on Mg(2+) as a cofactor.

It is found in the cytoplasm. It carries out the reaction Endonucleolytic cleavage to 5'-phosphomonoester.. Functionally, endonuclease that specifically degrades the RNA of RNA-DNA hybrids. The chain is Ribonuclease HII from Pseudomonas paraeruginosa (strain DSM 24068 / PA7) (Pseudomonas aeruginosa (strain PA7)).